The primary structure comprises 288 residues: Phosphopantetheinyl transferase (288 aa).

Residues arginine 60, 99–104 (RTEMGK), and 118–121 (NLSH) contribute to the CoA site. Mg(2+) is bound by residues aspartate 139 and glutamate 196. 196-200 (EAYLK) is a binding site for CoA.

The protein belongs to the P-Pant transferase superfamily. AcpS family. As to quaternary structure, monomer.

The protein resides in the cytoplasm. It is found in the cytosol. It catalyses the reaction apo-[ACP] + CoA = holo-[ACP] + adenosine 3',5'-bisphosphate + H(+). It functions in the pathway lipid metabolism; fatty acid biosynthesis. In terms of biological role, phosphopantetheinyl transferase that is essential for attaching phosphopantetheine to ACP domains of the polyunsaturated fatty acid (PUFA) synthase converting the inactive apo-synthase to the active holo-synthase. The polypeptide is Phosphopantetheinyl transferase (Thraustochytrium sp. (strain ATCC 26185 / S-3)).